The chain runs to 346 residues: Histidinol-phosphate aminotransferase (346 aa).

Lys209 is modified (N6-(pyridoxal phosphate)lysine).

Belongs to the class-II pyridoxal-phosphate-dependent aminotransferase family. Histidinol-phosphate aminotransferase subfamily. Homodimer. Pyridoxal 5'-phosphate serves as cofactor.

The enzyme catalyses L-histidinol phosphate + 2-oxoglutarate = 3-(imidazol-4-yl)-2-oxopropyl phosphate + L-glutamate. It functions in the pathway amino-acid biosynthesis; L-histidine biosynthesis; L-histidine from 5-phospho-alpha-D-ribose 1-diphosphate: step 7/9. The chain is Histidinol-phosphate aminotransferase from Vibrio vulnificus (strain CMCP6).